The sequence spans 542 residues: Protein MPA43 (542 aa).

This chain is Protein MPA43 (MPA43), found in Saccharomyces cerevisiae (strain ATCC 204508 / S288c) (Baker's yeast).